Here is a 192-residue protein sequence, read N- to C-terminus: Ribosomal RNA small subunit methyltransferase G (192 aa).

S-adenosyl-L-methionine is bound by residues Gly63, Phe68, 112-113, and Arg125; that span reads IE.

This sequence belongs to the methyltransferase superfamily. RNA methyltransferase RsmG family.

Its subcellular location is the cytoplasm. It carries out the reaction guanosine(527) in 16S rRNA + S-adenosyl-L-methionine = N(7)-methylguanosine(527) in 16S rRNA + S-adenosyl-L-homocysteine. In terms of biological role, specifically methylates the N7 position of guanine in position 527 of 16S rRNA. The protein is Ribosomal RNA small subunit methyltransferase G of Rickettsia bellii (strain OSU 85-389).